Consider the following 151-residue polypeptide: MSLQFNSIALLLVSLILLGVLGNNSSITISATILLLMQQTFLAKYIPFMERYGVNIGIIVLTIGVLSPIVSGKVQLPNWTALIHWKMFLAMAVGVLVAWFGGRGVNLMGTQPSLLTGLLVGTILGVAFLGGVPVGPLIAAGILSLFIGKTG.

4 helical membrane-spanning segments follow: residues 1 to 21 (MSLQ…LGVL), 52 to 72 (YGVN…IVSG), 81 to 101 (ALIH…AWFG), and 123 to 143 (ILGV…AGIL).

The protein belongs to the UPF0756 family.

It localises to the cell membrane. The polypeptide is UPF0756 membrane protein HSM_1471 (Histophilus somni (strain 2336) (Haemophilus somnus)).